The sequence spans 326 residues: Triacylglycerol lipase 2 (326 aa).

The short motif at 142–146 is the (A/G)XSXG lipase motif element; the sequence is AHSMG.

In terms of assembly, interacts with MIA40; forms mixed disulfide intermediates with MIA40.

It localises to the mitochondrion. The protein localises to the mitochondrion intermembrane space. It catalyses the reaction a triacylglycerol + H2O = a diacylglycerol + a fatty acid + H(+). The catalysed reaction is 1,2,3-tri-(9Z-octadecenoyl)-glycerol + H2O = di-(9Z)-octadecenoylglycerol + (9Z)-octadecenoate + H(+). It carries out the reaction 1,2,3-tributanoylglycerol + H2O = dibutanoylglycerol + butanoate + H(+). The enzyme catalyses 1,2,3-trioctanoylglycerol + H2O = dioctanoylglycerol + octanoate + H(+). It catalyses the reaction di-(9Z)-octadecenoylglycerol + H2O = (9Z-octadecenoyl)-glycerol + (9Z)-octadecenoate + H(+). The catalysed reaction is dioctanoylglycerol + H2O = octanoylglycerol + octanoate + H(+). In terms of biological role, mitochondrial triacylglycerol (TAG) lipase with activity toward long-chain diacylglycerols (DAGs) and triacylglycerols (TAGs). Involved in mitochondrial lipid metabolism. The protein is Triacylglycerol lipase 2 (TGL2) of Saccharomyces cerevisiae (strain ATCC 204508 / S288c) (Baker's yeast).